A 424-amino-acid chain; its full sequence is Serine/threonine-protein kinase H1 (424 aa).

The N-myristoyl glycine moiety is linked to residue Gly2. Cys3 carries S-palmitoyl cysteine lipidation. Positions 59–79 (APPCPGVPNTGHTAPPSEPPR) are disordered. The Protein kinase domain maps to 98-355 (YDIKALIGRG…ALQALRHPWV (258 aa)). Residues 104–112 (IGRGSFSRV) and Lys127 contribute to the ATP site. Catalysis depends on Asp218, which acts as the Proton acceptor. The interval 378 to 408 (RASSRCQSTKSSQSTRSSRSTRSNKSRRVRE) is disordered. Residues Ser380 and Ser381 each carry the phosphoserine; by autocatalysis modification. Positions 381–398 (SRCQSTKSSQSTRSSRST) are enriched in low complexity.

It belongs to the protein kinase superfamily. CAMK Ser/Thr protein kinase family. Homodimer. Autophosphorylated on serine residues. Post-translationally, myristoylated. Required for membrane association. Prerequisite for palmitoylation to occur. In terms of processing, palmitoylated.

It localises to the golgi apparatus. It is found in the cytoplasm. The protein localises to the cytoskeleton. Its subcellular location is the microtubule organizing center. The protein resides in the centrosome. It localises to the nucleus speckle. It is found in the endoplasmic reticulum membrane. The protein localises to the cell membrane. It carries out the reaction L-seryl-[protein] + ATP = O-phospho-L-seryl-[protein] + ADP + H(+). The catalysed reaction is L-threonyl-[protein] + ATP = O-phospho-L-threonyl-[protein] + ADP + H(+). Activity depends on Ca(2+) concentration. Serine/threonine protein kinase that may be involved in the regulation of pre-mRNA processing. It may phosphorylate components of nuclear splice factor compartments (SFC), such as non-snRNP splicing factors containing a serine/arginine-rich domain (SR proteins). Reversible phosphorylation of SR proteins may cause their release into the nucleoplasm and change their local concentration, thereby influencing alternative splicing. The sequence is that of Serine/threonine-protein kinase H1 (Pskh1) from Mus musculus (Mouse).